Consider the following 366-residue polypeptide: Holliday junction branch migration complex subunit RuvB (366 aa).

The disordered stretch occupies residues 1 to 49 (MAIISSKKQPPEPNGQPNKRPESAPSVPKEKVLQPEAAIDEQGKQEESI). A large ATPase domain (RuvB-L) region spans residues 13–210 (PNGQPNKRPE…FGLIQKLRFY (198 aa)). ATP contacts are provided by residues isoleucine 49, arginine 50, glycine 91, lysine 94, threonine 95, threonine 96, 157-159 (EDY), arginine 200, tyrosine 210, and arginine 247. Mg(2+) is bound at residue threonine 95. A small ATPAse domain (RuvB-S) region spans residues 211 to 281 (EVDELSQIVL…IAAEALQLFQ (71 aa)). Residues 284 to 366 (PCGLDWTDRR…TPPNEQLSLL (83 aa)) are head domain (RuvB-H). Positions 339 and 344 each coordinate DNA.

Belongs to the RuvB family. In terms of assembly, homohexamer. Forms an RuvA(8)-RuvB(12)-Holliday junction (HJ) complex. HJ DNA is sandwiched between 2 RuvA tetramers; dsDNA enters through RuvA and exits via RuvB. An RuvB hexamer assembles on each DNA strand where it exits the tetramer. Each RuvB hexamer is contacted by two RuvA subunits (via domain III) on 2 adjacent RuvB subunits; this complex drives branch migration. In the full resolvosome a probable DNA-RuvA(4)-RuvB(12)-RuvC(2) complex forms which resolves the HJ.

Its subcellular location is the cytoplasm. The enzyme catalyses ATP + H2O = ADP + phosphate + H(+). Its function is as follows. The RuvA-RuvB-RuvC complex processes Holliday junction (HJ) DNA during genetic recombination and DNA repair, while the RuvA-RuvB complex plays an important role in the rescue of blocked DNA replication forks via replication fork reversal (RFR). RuvA specifically binds to HJ cruciform DNA, conferring on it an open structure. The RuvB hexamer acts as an ATP-dependent pump, pulling dsDNA into and through the RuvAB complex. RuvB forms 2 homohexamers on either side of HJ DNA bound by 1 or 2 RuvA tetramers; 4 subunits per hexamer contact DNA at a time. Coordinated motions by a converter formed by DNA-disengaged RuvB subunits stimulates ATP hydrolysis and nucleotide exchange. Immobilization of the converter enables RuvB to convert the ATP-contained energy into a lever motion, pulling 2 nucleotides of DNA out of the RuvA tetramer per ATP hydrolyzed, thus driving DNA branch migration. The RuvB motors rotate together with the DNA substrate, which together with the progressing nucleotide cycle form the mechanistic basis for DNA recombination by continuous HJ branch migration. Branch migration allows RuvC to scan DNA until it finds its consensus sequence, where it cleaves and resolves cruciform DNA. The chain is Holliday junction branch migration complex subunit RuvB from Nostoc sp. (strain PCC 7120 / SAG 25.82 / UTEX 2576).